Reading from the N-terminus, the 352-residue chain is uncharacterized protein (352 aa).

Residues 285-352 are a coiled coil; that stretch reads FQHLRNARER…IKSEIRRLQR (68 aa).

This is an uncharacterized protein from Emericella nidulans (strain FGSC A4 / ATCC 38163 / CBS 112.46 / NRRL 194 / M139) (Aspergillus nidulans).